We begin with the raw amino-acid sequence, 167 residues long: I-Kappa-B like protein I1 (167 aa).

ANK repeat units follow at residues 54 to 86 (HGKQ…DING), 91 to 121 (FGNT…NMGI), and 125 to 154 (LFKT…QCRI).

This sequence belongs to the polydnaviridae I-Kappa-B-like protein family.

Suppresses the host immune response through NF-kappa-B inactivation. Possesses ankyrin repeat domains required for NF-kappa-B binding but lacks the regulatory regions required for dissociation from NF-kappa-B and degradation. Therefore, prevents host NF-kappa-B release and subsequent activation. In Microplitis demolitor (Parasitoid wasp), this protein is I-Kappa-B like protein I1 (I1).